A 532-amino-acid chain; its full sequence is Flavin-containing monooxygenase 3 (532 aa).

Residues 9-13 (GAGVS), glutamate 32, 40-41 (LW), and 61-62 (NS) each bind FAD. NADP(+) is bound by residues 60-61 (SN) and 195-198 (SGCD). The residue at position 401 (serine 401) is a Phosphoserine. A helical membrane pass occupies residues 510–530 (FFFHWLKLFAIPILLIAVFLV).

The protein belongs to the FMO family. FAD is required as a cofactor. As to expression, liver.

It localises to the microsome membrane. The protein localises to the endoplasmic reticulum membrane. It catalyses the reaction trimethylamine + NADPH + O2 = trimethylamine N-oxide + NADP(+) + H2O. It carries out the reaction N,N-dimethylaniline + NADPH + O2 + H(+) = N,N-dimethylaniline N-oxide + NADP(+) + H2O. The catalysed reaction is hypotaurine + NADPH + O2 + H(+) = taurine + NADP(+) + H2O. The enzyme catalyses (S)-nicotine + NADPH + O2 = trans-(S)-nicotine N(1')-oxide + NADP(+) + H2O. It catalyses the reaction albendazole + NADPH + O2 + H(+) = albendazole S-oxide + NADP(+) + H2O. Functionally, essential hepatic enzyme that catalyzes the oxygenation of a wide variety of nitrogen- and sulfur-containing compounds including drugs as well as dietary compounds. Plays an important role in the metabolism of trimethylamine (TMA), via the production of trimethylamine N-oxide (TMAO) metabolite. TMA is generated by the action of gut microbiota using dietary precursors such as choline, choline containing compounds, betaine or L-carnitine. By regulating TMAO concentration, FMO3 directly impacts both platelet responsiveness and rate of thrombus formation. This is Flavin-containing monooxygenase 3 (FMO3) from Homo sapiens (Human).